Reading from the N-terminus, the 155-residue chain is RNA-binding protein 3 (155 aa).

The RRM domain maps to 6–84; sequence GKLFVGGLNF…RQIRVDHAGK (79 aa). Residue arginine 47 is modified to Omega-N-methylarginine. The interval 79–155 is disordered; it reads VDHAGKSARG…GGNYRDNYDN (77 aa). Arginine 105 is subject to Asymmetric dimethylarginine; alternate. Arginine 105 carries the dimethylated arginine; alternate modification. Arginine 105 carries the post-translational modification Omega-N-methylarginine; alternate. Residues 105-114 are compositionally biased toward gly residues; that stretch reads RGGGDQGYGS. An omega-N-methylarginine mark is found at arginine 120 and arginine 130. Residues serine 135 and serine 145 each carry the phosphoserine modification. Tyrosine 153 carries the phosphotyrosine modification.

Interacts with RPL4. Associates with the 60S ribosomal subunits. In terms of processing, arg-105 is dimethylated, probably to asymmetric dimethylarginine. Post-translationally, phosphorylated. Isoform 2 is methylated. As to expression, widely expressed in the brain. Highly expressed in the cerebellum and olfactory bulb (at protein level). Expressed in neurons and glial cells.

It localises to the nucleus. The protein resides in the cytoplasm. Its subcellular location is the cell projection. It is found in the dendrite. Cold-inducible mRNA binding protein that enhances global protein synthesis at both physiological and mild hypothermic temperatures. Reduces the relative abundance of microRNAs, when overexpressed. Enhances phosphorylation of translation initiation factors and active polysome formation. This Rattus norvegicus (Rat) protein is RNA-binding protein 3 (Rbm3).